The following is a 199-amino-acid chain: Recombination protein RecR (199 aa).

The C4-type zinc-finger motif lies at Cys-58–Cys-73. The 96-residue stretch at Ser-81–Pro-176 folds into the Toprim domain.

The protein belongs to the RecR family.

Its function is as follows. May play a role in DNA repair. It seems to be involved in an RecBC-independent recombinational process of DNA repair. It may act with RecF and RecO. The protein is Recombination protein RecR of Acetivibrio thermocellus (strain ATCC 27405 / DSM 1237 / JCM 9322 / NBRC 103400 / NCIMB 10682 / NRRL B-4536 / VPI 7372) (Clostridium thermocellum).